A 339-amino-acid polypeptide reads, in one-letter code: Anthranilate phosphoribosyltransferase (339 aa).

5-phospho-alpha-D-ribose 1-diphosphate-binding positions include glycine 81, 84–85, serine 89, 91–94, 109–117, and alanine 121; these read GD, NVSS, and KHGNRALSS. Anthranilate is bound at residue glycine 81. Serine 93 is a Mg(2+) binding site. Residue asparagine 112 participates in anthranilate binding. Residue arginine 167 coordinates anthranilate. The Mg(2+) site is built by aspartate 225 and glutamate 226.

This sequence belongs to the anthranilate phosphoribosyltransferase family. As to quaternary structure, homodimer. Requires Mg(2+) as cofactor.

It catalyses the reaction N-(5-phospho-beta-D-ribosyl)anthranilate + diphosphate = 5-phospho-alpha-D-ribose 1-diphosphate + anthranilate. It functions in the pathway amino-acid biosynthesis; L-tryptophan biosynthesis; L-tryptophan from chorismate: step 2/5. Catalyzes the transfer of the phosphoribosyl group of 5-phosphorylribose-1-pyrophosphate (PRPP) to anthranilate to yield N-(5'-phosphoribosyl)-anthranilate (PRA). In Brucella abortus (strain S19), this protein is Anthranilate phosphoribosyltransferase.